We begin with the raw amino-acid sequence, 382 residues long: Flap endonuclease 1 (382 aa).

The N-domain stretch occupies residues Met1–Arg104. Asp34 is a binding site for Mg(2+). DNA contacts are provided by Arg47 and Arg70. Mg(2+) contacts are provided by Asp86, Glu158, Glu160, Asp179, and Asp181. An I-domain region spans residues Glu122 to His253. Glu158 is a DNA binding site. DNA-binding residues include Gly231 and Asp233. Asp233 is a binding site for Mg(2+). The tract at residues Thr336 to Phe344 is interaction with PCNA. A compositionally biased stretch (basic and acidic residues) spans Lys359–Lys368. Residues Lys359–Lys382 form a disordered region. A compositionally biased stretch (basic residues) spans Lys369–Lys382.

Belongs to the XPG/RAD2 endonuclease family. FEN1 subfamily. As to quaternary structure, interacts with PCNA. Three molecules of crn-1 bind to one PCNA trimer with each molecule binding to one PCNA monomer. PCNA stimulates the nuclease activity without altering cleavage specificity. Requires Mg(2+) as cofactor. Post-translationally, phosphorylated. Phosphorylation upon DNA damage induces relocalization to the nuclear plasma.

It is found in the nucleus. It localises to the nucleolus. The protein resides in the nucleoplasm. The protein localises to the mitochondrion. In terms of biological role, structure-specific nuclease with 5'-flap endonuclease and 5'-3' exonuclease activities involved in DNA replication and repair. During DNA replication, cleaves the 5'-overhanging flap structure that is generated by displacement synthesis when DNA polymerase encounters the 5'-end of a downstream Okazaki fragment. It enters the flap from the 5'-end and then tracks to cleave the flap base, leaving a nick for ligation. Also involved in the long patch base excision repair (LP-BER) pathway, by cleaving within the apurinic/apyrimidinic (AP) site-terminated flap. Acts as a genome stabilization factor that prevents flaps from equilibrating into structures that lead to duplications and deletions. Also possesses 5'-3' exonuclease activity on nicked or gapped double-stranded DNA, and exhibits RNase H activity. Also involved in replication and repair of rDNA and in repairing mitochondrial DNA. This Caenorhabditis briggsae protein is Flap endonuclease 1.